The primary structure comprises 1621 residues: MENSGCALEVRWVQGINKKKVTFINDHTVCYPCGNFIVFHDTNTGKWSFLQCTTGSTGAFAVNTYSEVVAFSDQKLHPTIYVYTFPGFVKRAELKDGAQLDYSLIAFSHAAPYLASYSSIPDHVLTIWNWQESIPLCSKSDSQTTYTTLTFNPMNWHQLCLSSERSLTVWNIEICDNQYQLKAMPVKLPSEDGTTDIEEENLNSHTSNSVSYYGPLMPTSAVAGLVGDEAEIFIPKEQRKHSVQPSFHCWNATSDLYVGCAGGQILSISAETQKVTILAQKDQSADHLSRTTLLEGNIKTMAFHKEGLYVAGNDGVLHLFTIKGSEVKLEDSWNAQEPIDSISFSPSYKTLSITTSKGSLYLYNQRNPEETYKLLNVYSRDLLAADFLTFGNKYCLGTDISGHVQLWSVEDGKSVSSLNLNIQATAMACCPSSNYAAVGSSTGHIYFIDAVKTEAPRIVQRTRLYCVPVQHMHFDPRGNFLLTGAADRHIFILDARPSYSFQVLGYIVVCGEILTLSSLSSADTQQTKVMALVCPVDERKEEKGGTQLEMFSLPLQMLSSPSEYIDERGMFKDTMIQKISYDVDQPLFSAVMGYNSSSVFGYSSNETILLKYVIHKDISGSPVTALVAEKVVRGSQLGPGVLCLSPHLKWMAVSGRDGIVYVKDLLNMETMAQLQCHSYHNGGINSLAFSLDGQSIVTTGTCDGALVCLQWKSSGRSSSRLGLAGEYGKDLALSLQAAMKEEDQALSRMPVWTADADSLGVERKGKEYSQLSVDVTEQDSFPNTSANDVTWIKRKLEEAEKKETEKYAAEKEVIKTGIKKLRKTIQAMMRENESLPDIEKLDQQEFNLDTEEQERLYLDSEKEVARVRQEIELENLSKQYLREVIKQECWDSMAVKGRSVTAFHTGYEVMNYPMKERTPKELEKFARVLNLMKIEAVDLKVRKEIVETQPKIGPDDEEEVEEELMKCQDSSSLVGSLSDHYGGDTSCLYSQLILHSREEKINQIILLQDIIQNIKNAFNKDFDTVCRQKEQEITRVMERNNRIQEIMVELNLQEKLLEPTFTDNEKPERALTVDDSEVKVERYLTPEQKAKAEHLAKVEEAKRLAAQEDNAKQRALDDMMGGVLEVKKEDILRMEVPQPVFLARTEAEWTEEEKKQFKEYEKKCKDLSEEKEKYSKEELKINNLLFSLLIEEEINTRVAHLAYILDKKRKQKNQTAEIVKSFKSQVMAFRESYDNLVAEDKLLDRGFKKEFSDITSYQVDQLYKLYKRRPRVQRLRTQADSTAPFGERPGSAKAYKDSIALLMHAMDELDTPENVPEGVELPVWQRFCLARRSKIEYEQQVKIKALVLAEMQAFLDKRIEEDEKMRQDIENFMQELNVLRNEKMKFQLDLTVQFLLKQGQVELENTDLIPSFEDAILLHRSVIEDLNSTIKGLGEQKIASMVESKDFRKGIFQLEWEHRKIRMEMEDLEKKSRDISLLHVSKEFQVFLNEQNYDKRMSDQIQVLEETINAQEKQHGKNVKTYKKILKDLETHINKKIIANLELDKDLQELLVSFSERKHIYDVVGVEQSTEKAAKERYMEIIQRRKLVDLAKIQAQEIHELRSEVDRLRMKTFPALVQMEY.

WD repeat units follow at residues Gly-97 to Ser-138, Asp-141 to Gln-180, Leu-293 to Glu-330, Asn-334 to Lys-373, Val-377 to Ser-417, Leu-464 to Val-503, Gly-634 to Gln-673, and Tyr-679 to Leu-721. Coiled-coil stretches lie at residues Ile-792 to Glu-812, Thr-850 to Glu-870, Cys-1026 to Ile-1046, Val-1098 to Asp-1118, Thr-1150 to Glu-1177, Asp-1362 to Asp-1389, Ile-1451 to Gln-1514, and Ala-1591 to Lys-1611.

This sequence belongs to the CFAP43 family.

The protein resides in the cytoplasm. It localises to the cytoskeleton. The protein localises to the cilium axoneme. Involved in the regulation of the beating frequency of motile cilia in multiciliated cells of the larval epidermis. This chain is Cilia- and flagella-associated protein 43 (cfap43), found in Xenopus laevis (African clawed frog).